The sequence spans 522 residues: Peptide chain release factor 3 (522 aa).

Positions 10–277 (ASRKTFAIIS…TFVDFAPAPS (268 aa)) constitute a tr-type G domain. GTP is bound by residues 19–26 (SHPDAGKT), 87–91 (DTPGH), and 141–144 (NKMD).

It belongs to the TRAFAC class translation factor GTPase superfamily. Classic translation factor GTPase family. PrfC subfamily.

It is found in the cytoplasm. Increases the formation of ribosomal termination complexes and stimulates activities of RF-1 and RF-2. It binds guanine nucleotides and has strong preference for UGA stop codons. It may interact directly with the ribosome. The stimulation of RF-1 and RF-2 is significantly reduced by GTP and GDP, but not by GMP. This Listeria welshimeri serovar 6b (strain ATCC 35897 / DSM 20650 / CCUG 15529 / CIP 8149 / NCTC 11857 / SLCC 5334 / V8) protein is Peptide chain release factor 3.